Consider the following 464-residue polypeptide: MDYKFPKDFMFGTSTASYQIEGGWNEDGKGENIWDRLVHTSPEVIKDGTNGDIACDSYHKYKEDVAIIKDLNLKFYRFSISWARIAPSGVMNSLEPKGIAYYNNLINELIKNDIIPLVTMYHWDLPQYLQDLGGWVNPIMSDYFKEYARVLFTYFGDRVKWWITFNEPIAVCKGYSIKAYAPNLNLKTTGHYLAGHTQLIAHGKAYRLYEEMFKPTQNGKISISISGVFFMPKNAESDDDIETAERANQFERGWFGHPVYKGDYPPIMKKWVDQKSKEEGLPWSKLPKFTKDEIKLLKGTADFYALNHYSSRLVTFGSDPNPNFNPDASYVTSVDEAWLKPNETPYIIPVPEGLRKLLIWLKNEYGNPQLLITENGYGDDGQLDDFEKISYLKNYLNATLQAMYEDKCNVIGYTVWSLLDNFEWFYGYSIHFGLVKIDFNDPQRTRTKRESYTYFKNVVSTGKP.

A substrate-binding site is contributed by glutamine 19. Zn(2+) contacts are provided by histidine 39 and aspartate 52. Substrate contacts are provided by histidine 122 and asparagine 166. The Nucleophile role is filled by glutamate 167. The active-site Proton donor is glutamate 374. N-linked (GlcNAc...) asparagine glycosylation occurs at asparagine 397.

As to quaternary structure, homodimer. Expressed in the skeletal muscle tissues surrounding the head, abdomen and thorax. Not expressed in flight muscles (at protein level).

It catalyses the reaction a thioglucoside + H2O = a sugar + a thiol.. Its function is as follows. Hydrolyzes glucosinolates to a labile aglycone. This rapidly undergoes spontaneous rearrangement, eliminating sulfur to yield a number of toxic metabolites. Thereby developing a chemical defense system that exploits and mimics the host plant. The polypeptide is Myrosinase 1 (Brevicoryne brassicae (Mealy cabbage aphid)).